The following is a 346-amino-acid chain: Growth hormone-inducible transmembrane protein (346 aa).

Residues 1–45 (MLAARLVCLRTLPSRVFQPTFITKASPLVKNSITKNQWLLTPSRE) constitute a mitochondrion transit peptide. Topologically, residues 46-83 (YATKTRIRTHRGKTGQELKEAALEPSLEKVFKIDQMGK) are mitochondrial matrix. A helical membrane pass occupies residues 84–104 (WFVAGGAAVGLGALCYYGLGM). Residues 105–126 (SNEIGAIEKAVIWPQYVKDRIH) are Mitochondrial intermembrane-facing. Residues 127–147 (STYMYLAGSIGLTALSALALA) traverse the membrane as a helical segment. Residues 148 to 160 (RSPALMNFMMTGS) are Mitochondrial matrix-facing. The helical transmembrane segment at 161–181 (WMTIGATFAAMIGAGMLVQSI) threads the bilayer. Residues 182 to 191 (SYEQSPGPKH) lie on the Mitochondrial intermembrane side of the membrane. The chain crosses the membrane as a helical span at residues 192 to 212 (LAWMLHSGVMGAVVAPLTILG). Over 213 to 214 (GP) the chain is Mitochondrial matrix. Residues 215-235 (LLLRAAWYTAGIVGGLSTVAM) traverse the membrane as a helical segment. The Mitochondrial intermembrane portion of the chain corresponds to 236–245 (CAPSEKFLNM). The chain crosses the membrane as a helical span at residues 246–266 (GAPLGVGLGLVFASSLGSMFL). Residues 267–272 (PPTSVA) lie on the Mitochondrial matrix side of the membrane. A helical membrane pass occupies residues 273-293 (GATLYSVAMYGGLVLFSMFLL). The Mitochondrial intermembrane segment spans residues 294–346 (YDTQKVVKRAEITPAYGAQKYDPINSMLTIYMDTLNIFMRVATMLATGSNRKK).

Belongs to the BI1 family. Interacts with LETM1 and AFG3L2. In terms of processing, undergoes AFG3L2-mediated proteolytic degradation, upon hyperpolarization of mitochondria.

It localises to the mitochondrion inner membrane. Plays an important role in maintenance of mitochondrial morphology and in mediating either calcium or potassium/proton antiport. Mediates proton-dependent calcium efflux from mitochondrion. Also functions as an electroneutral mitochondrial proton/potassium exchanger. Required for the mitochondrial tubular network and cristae organization. Involved in apoptotic release of cytochrome c. Inhibits AFG3L2 proteolytic activity, stimulating respiration and stabilizing respiratory enzymes in actively respiring mitochondria. However, when mitochondria become hyperpolarized, GHITM loses its inhibitory activity toward AFG3L2 and the now active AFG3L2 turns first on GHITM and, if hyperpolarization persists, on other proteins of the mitochondria, leading to a broad remodeling of the proteome. This chain is Growth hormone-inducible transmembrane protein (Ghitm), found in Rattus norvegicus (Rat).